Here is a 282-residue protein sequence, read N- to C-terminus: Shikimate dehydrogenase (NADP(+)) (282 aa).

Residues 15-17 (SKS) and Thr62 each bind shikimate. Catalysis depends on Lys66, which acts as the Proton acceptor. 2 residues coordinate shikimate: Asn87 and Asp103. NADP(+)-binding positions include 127–131 (GAGGA), 151–156 (NRTHTK), and Met220. Tyr222 is a binding site for shikimate. Residue Gly244 participates in NADP(+) binding.

It belongs to the shikimate dehydrogenase family. Homodimer.

The enzyme catalyses shikimate + NADP(+) = 3-dehydroshikimate + NADPH + H(+). It participates in metabolic intermediate biosynthesis; chorismate biosynthesis; chorismate from D-erythrose 4-phosphate and phosphoenolpyruvate: step 4/7. In terms of biological role, involved in the biosynthesis of the chorismate, which leads to the biosynthesis of aromatic amino acids. Catalyzes the reversible NADPH linked reduction of 3-dehydroshikimate (DHSA) to yield shikimate (SA). The sequence is that of Shikimate dehydrogenase (NADP(+)) from Shewanella baltica (strain OS185).